The chain runs to 129 residues: Follitropin subunit beta (129 aa).

An N-terminal signal peptide occupies residues 1–18 (MKSVQFCFLFCCWRAICC). 6 cysteine pairs are disulfide-bonded: Cys-21/Cys-69, Cys-35/Cys-84, Cys-38/Cys-122, Cys-46/Cys-100, Cys-50/Cys-102, and Cys-105/Cys-112. 2 N-linked (GlcNAc...) asparagine glycosylation sites follow: Asn-25 and Asn-42.

It belongs to the glycoprotein hormones subunit beta family. In terms of assembly, heterodimer. The active follitropin is a heterodimer composed of an alpha chain/CGA shared with other hormones and a unique beta chain/FSHB shown here.

It is found in the secreted. Functionally, together with the alpha chain CGA constitutes follitropin, the follicle-stimulating hormone, and provides its biological specificity to the hormone heterodimer. Binds FSHR, a G protein-coupled receptor, on target cells to activate downstream signaling pathways. Follitropin is involved in follicle development and spermatogenesis in reproductive organs. This is Follitropin subunit beta (FSHB) from Capra hircus (Goat).